The primary structure comprises 392 residues: 1-deoxy-D-xylulose 5-phosphate reductoisomerase (392 aa).

NADPH contacts are provided by Thr-10, Gly-11, Ser-12, Ile-13, and Asn-124. Lys-125 serves as a coordination point for 1-deoxy-D-xylulose 5-phosphate. Glu-126 is a binding site for NADPH. Residue Asp-150 coordinates Mn(2+). 1-deoxy-D-xylulose 5-phosphate contacts are provided by Ser-151, Glu-152, Ser-180, and His-203. Mn(2+) is bound at residue Glu-152. Position 209 (Gly-209) interacts with NADPH. Positions 216, 221, 222, and 225 each coordinate 1-deoxy-D-xylulose 5-phosphate. Glu-225 is a binding site for Mn(2+).

The protein belongs to the DXR family. Requires Mg(2+) as cofactor. It depends on Mn(2+) as a cofactor.

It carries out the reaction 2-C-methyl-D-erythritol 4-phosphate + NADP(+) = 1-deoxy-D-xylulose 5-phosphate + NADPH + H(+). Its pathway is isoprenoid biosynthesis; isopentenyl diphosphate biosynthesis via DXP pathway; isopentenyl diphosphate from 1-deoxy-D-xylulose 5-phosphate: step 1/6. Its function is as follows. Catalyzes the NADPH-dependent rearrangement and reduction of 1-deoxy-D-xylulose-5-phosphate (DXP) to 2-C-methyl-D-erythritol 4-phosphate (MEP). This is 1-deoxy-D-xylulose 5-phosphate reductoisomerase from Saccharophagus degradans (strain 2-40 / ATCC 43961 / DSM 17024).